Reading from the N-terminus, the 333-residue chain is Ketol-acid reductoisomerase (NADP(+)) (333 aa).

A KARI N-terminal Rossmann domain is found at 2–182 (AKMYYDSDAS…GCTRAGVLET (181 aa)). NADP(+)-binding positions include 25 to 28 (YGSQ), arginine 48, serine 51, and 83 to 86 (DERQ). The active site involves histidine 108. Glycine 134 contacts NADP(+). The KARI C-terminal knotted domain occupies 183-328 (TFKEETETDL…AELRAMMPFI (146 aa)). Residues aspartate 191, glutamate 195, glutamate 227, and glutamate 231 each coordinate Mg(2+). Serine 252 lines the substrate pocket.

It belongs to the ketol-acid reductoisomerase family. Mg(2+) is required as a cofactor.

The catalysed reaction is (2R)-2,3-dihydroxy-3-methylbutanoate + NADP(+) = (2S)-2-acetolactate + NADPH + H(+). It catalyses the reaction (2R,3R)-2,3-dihydroxy-3-methylpentanoate + NADP(+) = (S)-2-ethyl-2-hydroxy-3-oxobutanoate + NADPH + H(+). It participates in amino-acid biosynthesis; L-isoleucine biosynthesis; L-isoleucine from 2-oxobutanoate: step 2/4. Its pathway is amino-acid biosynthesis; L-valine biosynthesis; L-valine from pyruvate: step 2/4. Functionally, involved in the biosynthesis of branched-chain amino acids (BCAA). Catalyzes an alkyl-migration followed by a ketol-acid reduction of (S)-2-acetolactate (S2AL) to yield (R)-2,3-dihydroxy-isovalerate. In the isomerase reaction, S2AL is rearranged via a Mg-dependent methyl migration to produce 3-hydroxy-3-methyl-2-ketobutyrate (HMKB). In the reductase reaction, this 2-ketoacid undergoes a metal-dependent reduction by NADPH to yield (R)-2,3-dihydroxy-isovalerate. The chain is Ketol-acid reductoisomerase (NADP(+)) from Desulfitobacterium hafniense (strain DSM 10664 / DCB-2).